We begin with the raw amino-acid sequence, 340 residues long: DNA-directed RNA polymerase subunit alpha (340 aa).

The segment at 1 to 233 (MYKNWRDLIR…EQLSIFINFD (233 aa)) is alpha N-terminal domain (alpha-NTD). Residues 246 to 340 (DEIDKINENL…RLRGEQNEEE (95 aa)) are alpha C-terminal domain (alpha-CTD).

This sequence belongs to the RNA polymerase alpha chain family. As to quaternary structure, homodimer. The RNAP catalytic core consists of 2 alpha, 1 beta, 1 beta' and 1 omega subunit. When a sigma factor is associated with the core the holoenzyme is formed, which can initiate transcription.

It carries out the reaction RNA(n) + a ribonucleoside 5'-triphosphate = RNA(n+1) + diphosphate. Functionally, DNA-dependent RNA polymerase catalyzes the transcription of DNA into RNA using the four ribonucleoside triphosphates as substrates. This is DNA-directed RNA polymerase subunit alpha from Pelobacter propionicus (strain DSM 2379 / NBRC 103807 / OttBd1).